Reading from the N-terminus, the 96-residue chain is UPF0235 protein PC1_3453 (96 aa).

Belongs to the UPF0235 family.

The polypeptide is UPF0235 protein PC1_3453 (Pectobacterium carotovorum subsp. carotovorum (strain PC1)).